The following is a 197-amino-acid chain: Large ribosomal subunit protein bL25 (197 aa).

It belongs to the bacterial ribosomal protein bL25 family. CTC subfamily. Part of the 50S ribosomal subunit; part of the 5S rRNA/L5/L18/L25 subcomplex. Contacts the 5S rRNA. Binds to the 5S rRNA independently of L5 and L18.

Functionally, this is one of the proteins that binds to the 5S RNA in the ribosome where it forms part of the central protuberance. In Citrifermentans bemidjiense (strain ATCC BAA-1014 / DSM 16622 / JCM 12645 / Bem) (Geobacter bemidjiensis), this protein is Large ribosomal subunit protein bL25.